Reading from the N-terminus, the 509-residue chain is Histone deacetylase 2 (509 aa).

Residues 24–338 (RRVCYFYDPE…WCYETGVALG (315 aa)) are histone deacetylase. His158 serves as the catalytic Proton donor/acceptor. Asp193, His195, and Asp281 together coordinate Zn(2+). The interval 394–509 (PSVQFEERIP…NAKNEPGSSL (116 aa)) is disordered. 3 stretches are compositionally biased toward basic and acidic residues: residues 398–409 (FEERIPETKLPE), 418–434 (DERH…DHKP), and 448–472 (VKRE…HKVP). The segment covering 481-494 (SSKQVPTADANSMA) has biased composition (polar residues).

Belongs to the histone deacetylase family. HD Type 1 subfamily. The cofactor is Zn(2+). Expressed in roots.

Its subcellular location is the nucleus. The enzyme catalyses N(6)-acetyl-L-lysyl-[histone] + H2O = L-lysyl-[histone] + acetate. Responsible for the deacetylation of lysine residues on the N-terminal part of the core histones (H2A, H2B, H3 and H4). Histone deacetylation gives a tag for epigenetic repression and plays an important role in transcriptional regulation, cell cycle progression and developmental events. Histone deacetylases act via the formation of large multiprotein complexes. This is Histone deacetylase 2 from Oryza sativa subsp. japonica (Rice).